Here is a 624-residue protein sequence, read N- to C-terminus: Protein FAM234B (624 aa).

A disordered region spans residues 1 to 91 (MATVLSRALK…GFPSEPLGGL (91 aa)). A Phosphoserine modification is found at S16. Position 26 is a phosphothreonine (T26). Phosphoserine occurs at positions 30, 33, and 63. Residues 107–127 (VFLLTLVISMVLVLLCAFLIP) traverse the membrane as a helical segment.

It belongs to the FAM234 family.

Its subcellular location is the membrane. The protein localises to the golgi outpost. It is found in the cytoplasm. It localises to the cytoskeleton. The protein resides in the microtubule organizing center. This Mus musculus (Mouse) protein is Protein FAM234B.